Consider the following 890-residue polypeptide: uncharacterized protein (890 aa).

An N-terminal signal peptide occupies residues 1-20 (MKILKSLVLLVLFMAMPAKA). Helical transmembrane passes span 518–538 (AALT…ALKL), 567–587 (TYFF…VVGA), 613–633 (LLFI…IITI), 651–671 (VIAF…IILM), 684–704 (ISTL…FLLI), and 775–795 (FLVL…SYGL). Positions 860–890 (KARKPEGGEHTNKFLAERNDVPKKEEGERKE) are disordered. A compositionally biased stretch (basic and acidic residues) spans 862–890 (RKPEGGEHTNKFLAERNDVPKKEEGERKE).

Belongs to the TrbL/VirB6 family.

The protein localises to the cell membrane. This is an uncharacterized protein from Rickettsia felis (strain ATCC VR-1525 / URRWXCal2) (Rickettsia azadi).